A 120-amino-acid polypeptide reads, in one-letter code: Large ribosomal subunit protein uL18 (120 aa).

This sequence belongs to the universal ribosomal protein uL18 family. As to quaternary structure, part of the 50S ribosomal subunit; part of the 5S rRNA/L5/L18/L25 subcomplex. Contacts the 5S and 23S rRNAs.

Its function is as follows. This is one of the proteins that bind and probably mediate the attachment of the 5S RNA into the large ribosomal subunit, where it forms part of the central protuberance. This chain is Large ribosomal subunit protein uL18, found in Rippkaea orientalis (strain PCC 8801 / RF-1) (Cyanothece sp. (strain PCC 8801)).